The primary structure comprises 209 residues: Thiamine-phosphate synthase (209 aa).

Residues 38–42 and asparagine 70 each bind 4-amino-2-methyl-5-(diphosphooxymethyl)pyrimidine; that span reads QLREK. Residues aspartate 71 and aspartate 90 each contribute to the Mg(2+) site. Serine 109 serves as a coordination point for 4-amino-2-methyl-5-(diphosphooxymethyl)pyrimidine. Residue 135-137 coordinates 2-[(2R,5Z)-2-carboxy-4-methylthiazol-5(2H)-ylidene]ethyl phosphate; it reads TPT. Lysine 138 contributes to the 4-amino-2-methyl-5-(diphosphooxymethyl)pyrimidine binding site. 2-[(2R,5Z)-2-carboxy-4-methylthiazol-5(2H)-ylidene]ethyl phosphate-binding positions include glycine 166 and 186 to 187; that span reads IS.

This sequence belongs to the thiamine-phosphate synthase family. Requires Mg(2+) as cofactor.

It carries out the reaction 2-[(2R,5Z)-2-carboxy-4-methylthiazol-5(2H)-ylidene]ethyl phosphate + 4-amino-2-methyl-5-(diphosphooxymethyl)pyrimidine + 2 H(+) = thiamine phosphate + CO2 + diphosphate. The catalysed reaction is 2-(2-carboxy-4-methylthiazol-5-yl)ethyl phosphate + 4-amino-2-methyl-5-(diphosphooxymethyl)pyrimidine + 2 H(+) = thiamine phosphate + CO2 + diphosphate. It catalyses the reaction 4-methyl-5-(2-phosphooxyethyl)-thiazole + 4-amino-2-methyl-5-(diphosphooxymethyl)pyrimidine + H(+) = thiamine phosphate + diphosphate. The protein operates within cofactor biosynthesis; thiamine diphosphate biosynthesis; thiamine phosphate from 4-amino-2-methyl-5-diphosphomethylpyrimidine and 4-methyl-5-(2-phosphoethyl)-thiazole: step 1/1. Functionally, condenses 4-methyl-5-(beta-hydroxyethyl)thiazole monophosphate (THZ-P) and 2-methyl-4-amino-5-hydroxymethyl pyrimidine pyrophosphate (HMP-PP) to form thiamine monophosphate (TMP). This is Thiamine-phosphate synthase from Syntrophomonas wolfei subsp. wolfei (strain DSM 2245B / Goettingen).